Reading from the N-terminus, the 331-residue chain is GTP 3',8-cyclase (331 aa).

Residues 9-233 (PFGRRITYLR…VRSSKVTGGP (225 aa)) form the Radical SAM core domain. R18 is a GTP binding site. C25 and C29 together coordinate [4Fe-4S] cluster. Y31 serves as a coordination point for S-adenosyl-L-methionine. C32 is a [4Fe-4S] cluster binding site. R67 contributes to the GTP binding site. S-adenosyl-L-methionine is bound at residue G71. T98 serves as a coordination point for GTP. An S-adenosyl-L-methionine-binding site is contributed by S122. Residue K159 participates in GTP binding. M193 contributes to the S-adenosyl-L-methionine binding site. Residues C257 and C260 each coordinate [4Fe-4S] cluster. 262 to 264 (RVR) contributes to the GTP binding site. Position 274 (C274) interacts with [4Fe-4S] cluster.

The protein belongs to the radical SAM superfamily. MoaA family. In terms of assembly, monomer and homodimer. [4Fe-4S] cluster serves as cofactor.

It carries out the reaction GTP + AH2 + S-adenosyl-L-methionine = (8S)-3',8-cyclo-7,8-dihydroguanosine 5'-triphosphate + 5'-deoxyadenosine + L-methionine + A + H(+). It participates in cofactor biosynthesis; molybdopterin biosynthesis. In terms of biological role, catalyzes the cyclization of GTP to (8S)-3',8-cyclo-7,8-dihydroguanosine 5'-triphosphate. The protein is GTP 3',8-cyclase of Ectopseudomonas mendocina (strain ymp) (Pseudomonas mendocina).